A 908-amino-acid polypeptide reads, in one-letter code: SH3 and PX domain-containing protein 2B (908 aa).

Residues 5–129 (RSIVEVKVLD…QFFETRPEDL (125 aa)) form the PX domain. Tyr25 carries the post-translational modification Phosphotyrosine. SH3 domains lie at 152-211 (MVLE…GQDG) and 221-280 (EEEE…KNSG). Phosphoserine occurs at positions 279 and 291. Disordered regions lie at residues 280-300 (GEPL…ALDL) and 315-366 (ELLN…PPIP). The segment covering 315-337 (ELLNNQRDGRFEGRLVPDGDVKQ) has biased composition (basic and acidic residues). The span at 338–347 (RSPKMRQRPP) shows a compositional bias: basic residues. Positions 368-427 (QVEEEYYTIAEFQTTIPDGISFQAGLKVEVIEKSLSGWWYIQMEDKEGWAPATFIDKYKK) constitute an SH3 3 domain. Residues 455–832 (TENNTGPEAV…LGPRVTGKVG (378 aa)) form a disordered region. Composition is skewed to basic and acidic residues over residues 486–499 (KDWK…RKAS), 516–546 (QEEK…KMEP), 569–584 (LARD…DKSK), 595–606 (CGHKVLAKEVKK), and 615–625 (SKAELSEEKVD). Phosphoserine is present on residues Ser499 and Ser528. Tyr661 is subject to Phosphotyrosine. Residues 671–684 (KSQEKALLDGESHH) show a composition bias toward basic and acidic residues. A compositionally biased stretch (pro residues) spans 754-764 (VVPPRRPPPPK). Ser840 carries the phosphoserine modification. An SH3 4 domain is found at 847–908 (PKDSLYVAVA…IPSNYLRKKP (62 aa)).

The protein belongs to the SH3PXD2 family. As to quaternary structure, interacts with NOXO1. Interacts (via SH3 domains) with NOXA1; the interaction is direct. Interacts with ADAM15. Interacts with FASLG. In terms of processing, phosphorylated in SRC-transformed cells. Highly expressed in the stromal-vascular fraction of white adipose tissue with moderate expression in heart, skeletal muscle and the mature adipocyte fraction of white adipose tissue. Also expressed in brain, spleen, kidney and liver. Expressed in white and brown adipose tissues, eye, lung, heart, brain, spleen, stomach, liver and skeletal muscle (at protein level). Not expressed in kidney or bone marrow.

It localises to the cytoplasm. Its subcellular location is the cell projection. It is found in the podosome. Adapter protein involved in invadopodia and podosome formation and extracellular matrix degradation. Binds matrix metalloproteinases (ADAMs), NADPH oxidases (NOXs) and phosphoinositides. Acts as an organizer protein that allows NOX1- or NOX3-dependent reactive oxygen species (ROS) generation and ROS localization. Plays a role in mitotic clonal expansion during the immediate early stage of adipocyte differentiation. The polypeptide is SH3 and PX domain-containing protein 2B (Sh3pxd2b) (Mus musculus (Mouse)).